Reading from the N-terminus, the 154-residue chain is Large-conductance mechanosensitive channel (154 aa).

Helical transmembrane passes span V14 to L34 and V86 to V106.

This sequence belongs to the MscL family. Homopentamer.

The protein resides in the cell membrane. Channel that opens in response to stretch forces in the membrane lipid bilayer. May participate in the regulation of osmotic pressure changes within the cell. In Dehalococcoides mccartyi (strain CBDB1), this protein is Large-conductance mechanosensitive channel.